A 415-amino-acid polypeptide reads, in one-letter code: Serine hydroxymethyltransferase (415 aa).

Residues leucine 118 and glycine 122–leucine 124 each bind (6S)-5,6,7,8-tetrahydrofolate. Position 227 is an N6-(pyridoxal phosphate)lysine (lysine 227).

This sequence belongs to the SHMT family. Homodimer. It depends on pyridoxal 5'-phosphate as a cofactor.

It localises to the cytoplasm. It carries out the reaction (6R)-5,10-methylene-5,6,7,8-tetrahydrofolate + glycine + H2O = (6S)-5,6,7,8-tetrahydrofolate + L-serine. The protein operates within one-carbon metabolism; tetrahydrofolate interconversion. It participates in amino-acid biosynthesis; glycine biosynthesis; glycine from L-serine: step 1/1. In terms of biological role, catalyzes the reversible interconversion of serine and glycine with tetrahydrofolate (THF) serving as the one-carbon carrier. This reaction serves as the major source of one-carbon groups required for the biosynthesis of purines, thymidylate, methionine, and other important biomolecules. Also exhibits THF-independent aldolase activity toward beta-hydroxyamino acids, producing glycine and aldehydes, via a retro-aldol mechanism. This chain is Serine hydroxymethyltransferase, found in Elusimicrobium minutum (strain Pei191).